Consider the following 93-residue polypeptide: MASEILVDHRQKALALLKLDADKILKLIQVQMDNLTMPQCPLYEEVLDTQMFGLSREIDFAVRLGLVDQHEGKKLLDKLERELSALHDAFTKK.

It belongs to the UPF0358 family.

The protein is UPF0358 protein BPUM_1375 of Bacillus pumilus (strain SAFR-032).